The primary structure comprises 281 residues: Tumor necrosis factor ligand superfamily member 10 (281 aa).

Residues 1–17 (MAMMEVQGGPSLGQTCV) are Cytoplasmic-facing. The chain crosses the membrane as a helical; Signal-anchor for type II membrane protein span at residues 18-38 (LIVIFTVLLQSLCVAVTYVYF). At 39–281 (TNELKQMQDK…ASFFGAFLVG (243 aa)) the chain is on the extracellular side. A THD domain is found at 122–280 (VAAHITGTRG…EASFFGAFLV (159 aa)). Residues 124 to 144 (AHITGTRGRSNTLSSPNSKNE) are disordered. The segment covering 130–141 (RGRSNTLSSPNS) has biased composition (polar residues). Cysteine 230 provides a ligand contact to Zn(2+).

The protein belongs to the tumor necrosis factor family. Homotrimer. One TNFSF10 homotrimer interacts with three TNFSF10A mononers. One TNFSF10 homotrimer interacts with three TNFSF10B mononers. Post-translationally, tyrosine phosphorylated by PKDCC/VLK. In terms of tissue distribution, widespread; most predominant in spleen, lung and prostate.

It is found in the cell membrane. It localises to the secreted. In terms of biological role, cytokine that binds to TNFRSF10A/TRAILR1, TNFRSF10B/TRAILR2, TNFRSF10C/TRAILR3, TNFRSF10D/TRAILR4 and possibly also to TNFRSF11B/OPG. Induces apoptosis. Its activity may be modulated by binding to the decoy receptors TNFRSF10C/TRAILR3, TNFRSF10D/TRAILR4 and TNFRSF11B/OPG that cannot induce apoptosis. This Homo sapiens (Human) protein is Tumor necrosis factor ligand superfamily member 10 (TNFSF10).